The chain runs to 793 residues: Ribosome biogenesis protein BOP1 homolog (793 aa).

Basic residues predominate over residues 1-11 (MTKKLTLKRKG). Positions 1–168 (MTKKLTLKRK…DSDTSDEEDI (168 aa)) are disordered. Acidic residues-rich tracts occupy residues 44–53 (EDTTDDEGID), 60–72 (SSED…DEEG), and 83–116 (SSEE…DGDE). The segment covering 117 to 129 (EKPTTSKQNKSED) has biased composition (basic and acidic residues). Positions 133–143 (SSKVSKKTQPP) are enriched in polar residues. Basic and acidic residues predominate over residues 146–161 (DLVKRDPSHPEYHDSD). WD repeat units lie at residues 454 to 495 (GHTD…RTIE), 497 to 535 (EDVV…KVLV), 579 to 621 (NHFK…SQIP), 624 to 662 (KSKG…LVKK), 665 to 704 (TNSK…KPYQ), 708 to 747 (LHRN…DLLQ), and 763 to 793 (REDF…RLYT).

It belongs to the WD repeat BOP1/ERB1 family.

It is found in the nucleus. It localises to the nucleolus. The protein resides in the nucleoplasm. Its function is as follows. Required for maturation of ribosomal RNAs and formation of the large ribosomal subunit. In Drosophila ananassae (Fruit fly), this protein is Ribosome biogenesis protein BOP1 homolog.